The primary structure comprises 292 residues: 4-hydroxybenzoate solanesyltransferase (292 aa).

9 helical membrane-spanning segments follow: residues 28–48 (LILM…LPPL), 49–69 (PLLG…CVVN), 97–117 (VGIG…FYLT), 118–138 (PLSF…PGAK), 140–160 (VFPV…LISW), 172–192 (WVLW…YAMA), 217–237 (VGIF…ILML), 239–259 (PLYW…YIQL), and 272–292 (IFGQ…LGWL).

The protein belongs to the UbiA prenyltransferase family. Mg(2+) is required as a cofactor.

It is found in the cell inner membrane. The enzyme catalyses all-trans-nonaprenyl diphosphate + 4-hydroxybenzoate = 4-hydroxy-3-(all-trans-nonaprenyl)benzoate + diphosphate. In terms of biological role, catalyzes the prenylation of para-hydroxybenzoate (PHB) with an all-trans polyprenyl group. Mediates the second step in the final reaction sequence of plastoquinone-9 (PQ-9) biosynthesis, which is the condensation of the polyisoprenoid side chain with PHB, generating the first membrane-bound Q intermediate 4-hydroxy-3-solanesylbenzoate. In Synechocystis sp. (strain ATCC 27184 / PCC 6803 / Kazusa), this protein is 4-hydroxybenzoate solanesyltransferase.